The chain runs to 356 residues: Heat-inducible transcription repressor HrcA (356 aa).

It belongs to the HrcA family.

Functionally, negative regulator of class I heat shock genes (grpE-dnaK-dnaJ and groELS operons). Prevents heat-shock induction of these operons. This is Heat-inducible transcription repressor HrcA from Gluconobacter oxydans (strain 621H) (Gluconobacter suboxydans).